We begin with the raw amino-acid sequence, 151 residues long: Deoxyuridine 5'-triphosphate nucleotidohydrolase (151 aa).

Residues 70–72 (RSG), Asn-83, 87–89 (LID), and Met-97 contribute to the substrate site.

This sequence belongs to the dUTPase family. The cofactor is Mg(2+).

The catalysed reaction is dUTP + H2O = dUMP + diphosphate + H(+). Its pathway is pyrimidine metabolism; dUMP biosynthesis; dUMP from dCTP (dUTP route): step 2/2. Its function is as follows. This enzyme is involved in nucleotide metabolism: it produces dUMP, the immediate precursor of thymidine nucleotides and it decreases the intracellular concentration of dUTP so that uracil cannot be incorporated into DNA. This chain is Deoxyuridine 5'-triphosphate nucleotidohydrolase, found in Pseudomonas entomophila (strain L48).